We begin with the raw amino-acid sequence, 660 residues long: DNA mismatch repair protein MutL (660 aa).

The protein belongs to the DNA mismatch repair MutL/HexB family.

In terms of biological role, this protein is involved in the repair of mismatches in DNA. It is required for dam-dependent methyl-directed DNA mismatch repair. May act as a 'molecular matchmaker', a protein that promotes the formation of a stable complex between two or more DNA-binding proteins in an ATP-dependent manner without itself being part of a final effector complex. The protein is DNA mismatch repair protein MutL of Streptococcus pyogenes serotype M3 (strain ATCC BAA-595 / MGAS315).